The primary structure comprises 277 residues: Undecaprenyl-diphosphatase (277 aa).

Transmembrane regions (helical) follow at residues 85-105, 109-129, 188-208, 218-238, and 256-276; these read VNIV…AGAI, LFAP…ILWV, ATEF…VYSV, ADIP…FLCV, and YRIG…VVWA.

The protein belongs to the UppP family.

The protein resides in the cell inner membrane. The catalysed reaction is di-trans,octa-cis-undecaprenyl diphosphate + H2O = di-trans,octa-cis-undecaprenyl phosphate + phosphate + H(+). Its function is as follows. Catalyzes the dephosphorylation of undecaprenyl diphosphate (UPP). Confers resistance to bacitracin. The protein is Undecaprenyl-diphosphatase of Herminiimonas arsenicoxydans.